The primary structure comprises 495 residues: DNA-directed RNA polymerase subunit alpha (495 aa).

An alpha N-terminal domain (alpha-NTD) region spans residues M1–P301. Disordered stretches follow at residues S159 to H227 and Q391 to T495. An insert region spans residues P170–T237. Residues D172–S186 show a composition bias toward basic and acidic residues. Polar residues-rich tracts occupy residues V207–T219 and Q391–A403. An alpha C-terminal domain (alpha-CTD) region spans residues A317–T495. Basic and acidic residues predominate over residues R417–R426. The span at R444–A453 shows a compositional bias: basic residues. Polar residues-rich tracts occupy residues K464–E473 and L486–T495.

Belongs to the RNA polymerase alpha chain family. In plastids the minimal PEP RNA polymerase catalytic core is composed of four subunits: alpha, beta, beta', and beta''. When a (nuclear-encoded) sigma factor is associated with the core the holoenzyme is formed, which can initiate transcription.

Its subcellular location is the plastid. It localises to the chloroplast. It carries out the reaction RNA(n) + a ribonucleoside 5'-triphosphate = RNA(n+1) + diphosphate. DNA-dependent RNA polymerase catalyzes the transcription of DNA into RNA using the four ribonucleoside triphosphates as substrates. The sequence is that of DNA-directed RNA polymerase subunit alpha from Nephroselmis olivacea (Green alga).